Consider the following 325-residue polypeptide: Lipoyl synthase (325 aa).

A disordered region spans residues 1–32 (MPPLADASTETLSPAEQAAVRHPEKAHRPDQP). The segment covering 19–32 (AVRHPEKAHRPDQP) has biased composition (basic and acidic residues). Residues C66, C71, C77, C92, C96, C99, and S305 each contribute to the [4Fe-4S] cluster site. In terms of domain architecture, Radical SAM core spans 78–294 (WAKKHATFMI…AEVANAKGFL (217 aa)).

It belongs to the radical SAM superfamily. Lipoyl synthase family. The cofactor is [4Fe-4S] cluster.

The protein localises to the cytoplasm. It carries out the reaction [[Fe-S] cluster scaffold protein carrying a second [4Fe-4S](2+) cluster] + N(6)-octanoyl-L-lysyl-[protein] + 2 oxidized [2Fe-2S]-[ferredoxin] + 2 S-adenosyl-L-methionine + 4 H(+) = [[Fe-S] cluster scaffold protein] + N(6)-[(R)-dihydrolipoyl]-L-lysyl-[protein] + 4 Fe(3+) + 2 hydrogen sulfide + 2 5'-deoxyadenosine + 2 L-methionine + 2 reduced [2Fe-2S]-[ferredoxin]. It functions in the pathway protein modification; protein lipoylation via endogenous pathway; protein N(6)-(lipoyl)lysine from octanoyl-[acyl-carrier-protein]: step 2/2. In terms of biological role, catalyzes the radical-mediated insertion of two sulfur atoms into the C-6 and C-8 positions of the octanoyl moiety bound to the lipoyl domains of lipoate-dependent enzymes, thereby converting the octanoylated domains into lipoylated derivatives. In Beijerinckia indica subsp. indica (strain ATCC 9039 / DSM 1715 / NCIMB 8712), this protein is Lipoyl synthase.